Reading from the N-terminus, the 668-residue chain is Acetoin catabolism regulatory protein (668 aa).

The Sigma-54 factor interaction domain occupies 341-570; sequence LTGGDAALQL…NVLEYARAVC (230 aa). Residues 369-376 and 433-442 contribute to the ATP site; these read GETGSGKE and ADGGTLFLDE. The segment covering 586–606 has biased composition (low complexity); it reads GPAPSAALPQPGPAQSPAAAP. A disordered region spans residues 586–611; it reads GPAPSAALPQPGPAQSPAAAPFDPHQ. Positions 630-649 form a DNA-binding region, H-T-H motif; sequence LSAVARQIGVSRMTLYRRME.

Required for sigma-54-dependent transcription of acoXABC. This chain is Acetoin catabolism regulatory protein (acoR), found in Cupriavidus necator (strain ATCC 17699 / DSM 428 / KCTC 22496 / NCIMB 10442 / H16 / Stanier 337) (Ralstonia eutropha).